An 836-amino-acid polypeptide reads, in one-letter code: Envelope glycoprotein gp160 (836 aa).

The first 21 residues, 1 to 21 (MGMQSGWPFFCLLISLTIGSD), serve as a signal peptide directing secretion. The Extracellular segment spans residues 22–656 (PHWVTVYYGV…ITKWLWYIKI (635 aa)). A disulfide bridge connects residues Cys-43 and Cys-63. 19 N-linked (GlcNAc...) asparagine; by host glycosylation sites follow: Asn-77, Asn-121, Asn-130, Asn-134, Asn-146, Asn-150, Asn-180, Asn-189, Asn-224, Asn-228, Asn-233, Asn-254, Asn-276, Asn-282, Asn-288, Asn-318, Asn-328, Asn-340, and Asn-341. 5 disulfides stabilise this stretch: Cys-108–Cys-197, Cys-115–Cys-188, Cys-120–Cys-147, Cys-210–Cys-239, and Cys-220–Cys-231. The V1 stretch occupies residues 120–146 (CNNSNGNSAGNSTTNRTEDLEDRQMKN). Residues 147–188 (CSFNITTEIRDRKKQVYSLFYVEDVVPIKDGTDNNTYRLINC) form a V2 region. Residues 283 to 316 (CTRPGNNTGGQVQIGPAMTFYNIEKIVGDVRQAY) are V3. A disulfide bridge connects residues Cys-283 and Cys-317. The tract at residues 349-359 (KNGGDLEVTHL) is CD4-binding loop. 2 cysteine pairs are disulfide-bonded: Cys-363–Cys-418 and Cys-370–Cys-391. The interval 370–391 (CNTSRLFNESENKTNKTIILPC) is V4. 6 N-linked (GlcNAc...) asparagine; by host glycosylation sites follow: Asn-371, Asn-377, Asn-381, Asn-384, Asn-415, and Asn-435. A V5 region spans residues 434–441 (GNKTVYPS). The fusion peptide stretch occupies residues 482-503 (AAFGLGALFLGFLGAAGSTMGA). The segment at 545–563 (KQLRAKVLAIERYLRDQQI) is immunosuppression. A disulfide bridge connects residues Cys-569 and Cys-575. N-linked (GlcNAc...) asparagine; by host glycans are attached at residues Asn-582, Asn-588, Asn-597, and Asn-609. Residues 605–639 (RKVRNYSGVIFDLIEQAQEQQNTNEKALLELDQWA) adopt a coiled-coil conformation. Residues 634 to 655 (ELDQWASLWNWFDITKWLWYIK) are MPER; binding to GalCer. A helical transmembrane segment spans residues 657–677 (AIMVVAGIIGIRIISAIITII). The Cytoplasmic portion of the chain corresponds to 678–836 (ARVRQGYSPL…IRQGLERALL (159 aa)). The YXXL motif; contains endocytosis signal signature appears at 684 to 687 (YSPL). Residues 696-715 (AARGPDRPEETEEGVGGQDR) are disordered. The short motif at 835 to 836 (LL) is the Di-leucine internalization motif element.

Belongs to the HIV-1 env protein family. As to quaternary structure, the mature envelope protein (Env) consists of a homotrimer of non-covalently associated gp120-gp41 heterodimers. The resulting complex protrudes from the virus surface as a spike. There seems to be as few as 10 spikes on the average virion. Interacts with host CD4, CCR5 and CXCR4. Gp120 also interacts with the C-type lectins CD209/DC-SIGN and CLEC4M/DC-SIGNR (collectively referred to as DC-SIGN(R)). Gp120 and gp41 interact with GalCer. Gp120 interacts with host ITGA4/ITGB7 complex; on CD4+ T-cells, this interaction results in rapid activation of integrin ITGAL/LFA-1, which facilitates efficient cell-to-cell spreading of HIV-1. Gp120 interacts with cell-associated heparan sulfate; this interaction increases virus infectivity on permissive cells and may be involved in infection of CD4- cells. The mature envelope protein (Env) consists of a homotrimer of non-covalently associated gp120-gp41 heterodimers. The resulting complex protrudes from the virus surface as a spike. There seems to be as few as 10 spikes on the average virion. In terms of processing, highly glycosylated by host. The high number of glycan on the protein is reffered to as 'glycan shield' because it contributes to hide protein sequence from adaptive immune system. Post-translationally, palmitoylation of the transmembrane protein and of Env polyprotein (prior to its proteolytic cleavage) is essential for their association with host cell membrane lipid rafts. Palmitoylation is therefore required for envelope trafficking to classical lipid rafts, but not for viral replication. Specific enzymatic cleavages in vivo yield mature proteins. Envelope glycoproteins are synthesized as an inactive precursor that is heavily N-glycosylated and processed likely by host cell furin in the Golgi to yield the mature SU and TM proteins. The cleavage site between SU and TM requires the minimal sequence [KR]-X-[KR]-R. About 2 of the 9 disulfide bonds of gp41 are reduced by P4HB/PDI, following binding to CD4 receptor.

Its subcellular location is the virion membrane. It localises to the host cell membrane. The protein localises to the host endosome membrane. Its function is as follows. Oligomerizes in the host endoplasmic reticulum into predominantly trimers. In a second time, gp160 transits in the host Golgi, where glycosylation is completed. The precursor is then proteolytically cleaved in the trans-Golgi and thereby activated by cellular furin or furin-like proteases to produce gp120 and gp41. Functionally, attaches the virus to the host lymphoid cell by binding to the primary receptor CD4. This interaction induces a structural rearrangement creating a high affinity binding site for a chemokine coreceptor like CXCR4 and/or CCR5. Acts as a ligand for CD209/DC-SIGN and CLEC4M/DC-SIGNR, which are respectively found on dendritic cells (DCs), and on endothelial cells of liver sinusoids and lymph node sinuses. These interactions allow capture of viral particles at mucosal surfaces by these cells and subsequent transmission to permissive cells. HIV subverts the migration properties of dendritic cells to gain access to CD4+ T-cells in lymph nodes. Virus transmission to permissive T-cells occurs either in trans (without DCs infection, through viral capture and transmission), or in cis (following DCs productive infection, through the usual CD4-gp120 interaction), thereby inducing a robust infection. In trans infection, bound virions remain infectious over days and it is proposed that they are not degraded, but protected in non-lysosomal acidic organelles within the DCs close to the cell membrane thus contributing to the viral infectious potential during DCs' migration from the periphery to the lymphoid tissues. On arrival at lymphoid tissues, intact virions recycle back to DCs' cell surface allowing virus transmission to CD4+ T-cells. In terms of biological role, acts as a class I viral fusion protein. Under the current model, the protein has at least 3 conformational states: pre-fusion native state, pre-hairpin intermediate state, and post-fusion hairpin state. During fusion of viral and target intracellular membranes, the coiled coil regions (heptad repeats) assume a trimer-of-hairpins structure, positioning the fusion peptide in close proximity to the C-terminal region of the ectodomain. The formation of this structure appears to drive apposition and subsequent fusion of viral and target cell membranes. Complete fusion occurs in host cell endosomes and is dynamin-dependent, however some lipid transfer might occur at the plasma membrane. The virus undergoes clathrin-dependent internalization long before endosomal fusion, thus minimizing the surface exposure of conserved viral epitopes during fusion and reducing the efficacy of inhibitors targeting these epitopes. Membranes fusion leads to delivery of the nucleocapsid into the cytoplasm. The polypeptide is Envelope glycoprotein gp160 (Human immunodeficiency virus type 1 group N (isolate YBF106) (HIV-1)).